A 404-amino-acid chain; its full sequence is MNCEHFGICGGCTNIQDYSTQLQAKHNLTLQEFQSFLDTKSKNFQYPTNPLAIEVFASPQEGFRARAEFRFSHVFQNKSGLDFAMNAFGYNHRVPIKKCPILLPTLQDIMPLLLHYLNTYDLLNHKLYACNLLSSLQNEIIITLIYHKSLDSHWESLALKIQKELEYTLNTNIHIIGRSKNHKHILSNDIICEHLTLFANTPKERTYTFFKQESRFCQPNPFINTQMLEFIVSALSSIYTPQTPCDMLELYCGSGNFTIPLASIFRHIFATEVVKSAITLLQKNMAKNNIENIIPARLNAFESIQALRKERVFFRLKNIDLDAFAFDCVLIDPPRSGVGEEEVLYFLQNFNTIIYVSCNPHTLLNDLRILSQSHYVMRFGLFDQFPHTYHRECIVILRKSNKIL.

S-adenosyl-L-methionine contacts are provided by glutamine 218, tyrosine 251, asparagine 256, glutamate 272, and aspartate 332. Cysteine 358 (nucleophile) is an active-site residue. Glutamate 392 acts as the Proton acceptor in catalysis.

It belongs to the class I-like SAM-binding methyltransferase superfamily. RNA M5U methyltransferase family. TrmA subfamily.

It catalyses the reaction uridine(54) in tRNA + S-adenosyl-L-methionine = 5-methyluridine(54) in tRNA + S-adenosyl-L-homocysteine + H(+). The enzyme catalyses uridine(341) in tmRNA + S-adenosyl-L-methionine = 5-methyluridine(341) in tmRNA + S-adenosyl-L-homocysteine + H(+). Functionally, dual-specificity methyltransferase that catalyzes the formation of 5-methyluridine at position 54 (m5U54) in all tRNAs, and that of position 341 (m5U341) in tmRNA (transfer-mRNA). The protein is tRNA/tmRNA (uracil-C(5))-methyltransferase of Helicobacter hepaticus (strain ATCC 51449 / 3B1).